The chain runs to 171 residues: Adenine phosphoribosyltransferase (171 aa).

This sequence belongs to the purine/pyrimidine phosphoribosyltransferase family. Homodimer.

It localises to the cytoplasm. The enzyme catalyses AMP + diphosphate = 5-phospho-alpha-D-ribose 1-diphosphate + adenine. It functions in the pathway purine metabolism; AMP biosynthesis via salvage pathway; AMP from adenine: step 1/1. Catalyzes a salvage reaction resulting in the formation of AMP, that is energically less costly than de novo synthesis. The polypeptide is Adenine phosphoribosyltransferase (Geotalea uraniireducens (strain Rf4) (Geobacter uraniireducens)).